A 461-amino-acid polypeptide reads, in one-letter code: PE-PGRS family protein PE_PGRS45 (461 aa).

In terms of domain architecture, PE spans 4–92; that stretch reads VNVAPQLVST…GSTYAVAEAA (89 aa). 2 disordered regions span residues 232–251 and 426–461; these read GGAGGTGGGEPSAGASGGNG and AGSLFNGAPGFGGPGGSGGASLLGPPGLAGTNGADG. Over residues 434-446 the composition is skewed to gly residues; that stretch reads PGFGGPGGSGGAS.

The protein belongs to the mycobacterial PE family. PGRS subfamily. In terms of assembly, interacts with human TIMM23, which is part of a complex that mediates the translocation of transit peptide-containing proteins across the mitochondrial inner membrane.

The protein localises to the cell membrane. It is found in the secreted. It localises to the cell wall. The protein resides in the host mitochondrion. The catalysed reaction is hexadecanal + NADP(+) + CoA = hexadecanoyl-CoA + NADPH + H(+). Its activity is regulated as follows. Oxidoreductase activity is inhibited by the first line anti-tubercular drug isoniazid (INH). Its function is as follows. May be an effector protein that contributes to pathogenesis by targeting host mitochondria, where it modulates host cellular processes. In THP1 macrophages, increases the ADP-to-ATP ratio and increases the cellular ROS levels. Also induces mitochondrial perturbations through membrane depolarization, release of mitochondrial superoxide, up-regulation of expression of host proapoptotic proteins (BAX and BIM) and release of cytochrome C into the cytosol. May bind calcium to increase intracellular calcium influx, which may further lead to mitochondrial perturbations. Mitochondrial perturbations and alteration of Ca(2+) influx are independent but simultaneous events. In terms of biological role, in vitro, shows NADPH-dependent fatty acyl coenzyme A oxidoreductase activity. Can oxidize palmitoyl-CoA, but not glutathione and thiourea. This Mycobacterium tuberculosis (strain ATCC 25618 / H37Rv) protein is PE-PGRS family protein PE_PGRS45.